The sequence spans 216 residues: Somatotropin (216 aa).

The first 26 residues, Met1–Ala26, serve as a signal peptide directing secretion. A Zn(2+)-binding site is contributed by His45. A disulfide bridge connects residues Cys78 and Cys189. Position 131 is a phosphoserine (Ser131). Glu198 contacts Zn(2+). A disulfide bridge connects residues Cys206 and Cys214.

The protein belongs to the somatotropin/prolactin family.

It is found in the secreted. Its function is as follows. Plays an important role in growth control. Its major role in stimulating body growth is to stimulate the liver and other tissues to secrete IGF1. It stimulates both the differentiation and proliferation of myoblasts. It also stimulates amino acid uptake and protein synthesis in muscle and other tissues. This Hippopotamus amphibius (Hippopotamus) protein is Somatotropin (GH1).